A 260-amino-acid polypeptide reads, in one-letter code: Interleukin-1 receptor-associated kinase 1-binding protein 1 (260 aa).

The interval 30–50 (GRETLPGLRHPLSSTQAQTAT) is disordered. Residues 41-50 (LSSTQAQTAT) show a composition bias toward polar residues. A phosphoserine mark is found at serine 56, serine 62, and serine 235. Threonine 237 carries the phosphothreonine modification. Residues 240–260 (AASKVFITFEVKGKEKRKKHL) form a required for nuclear localization (NLS) region. At serine 242 the chain carries Phosphoserine. The residue at position 247 (threonine 247) is a Phosphothreonine.

It belongs to the IRAK1BP1 family. As to quaternary structure, interacts with IRAK1 and RELA. Interacts with HSPA8 and HSPA1. Post-translationally, phosphorylation at Ser-56 and/or Ser-62 is required for full activity. Phosphorylated on at least one of Ser-235, Thr-237, Ser-242 and Thr-247 upon TNF-alpha activation, which favors nuclear translocation.

The protein resides in the cytoplasm. Its subcellular location is the nucleus. In terms of biological role, component of the IRAK1-dependent TNFRSF1A signaling pathway that leads to NF-kappa-B activation and is required for cell survival. Acts by enhancing RELA transcriptional activity. The sequence is that of Interleukin-1 receptor-associated kinase 1-binding protein 1 (IRAK1BP1) from Homo sapiens (Human).